Reading from the N-terminus, the 303-residue chain is Uricase (303 aa).

An N-acetylalanine modification is found at Ala2. N6-acetyllysine; alternate occurs at positions 10 and 23. N6-succinyllysine; alternate occurs at positions 10 and 23. Lys23 acts as the Charge relay system in catalysis. N6-acetyllysine is present on residues Lys27 and Lys36. 2 positions are modified to phosphoserine: Ser39 and Ser63. Thr68 acts as the Charge relay system in catalysis. Urate-binding residues include Thr68 and Asp69. Residues Lys118, Lys122, and Lys164 each carry the N6-acetyllysine modification. Phe170 provides a ligand contact to urate. An N6-acetyllysine mark is found at Lys175 and Lys185. Arg187 serves as a coordination point for urate. N6-acetyllysine; alternate is present on residues Lys220 and Lys227. Residues Lys220 and Lys227 each carry the N6-succinyllysine; alternate modification. At Ser231 the chain carries Phosphoserine. Val234, Gln235, and Asn261 together coordinate urate. The active-site Charge relay system is His263. Lys277 carries the post-translational modification N6-acetyllysine. At Tyr288 the chain carries Phosphotyrosine. The Microbody targeting signal motif lies at 301–303 (SRL).

The protein belongs to the uricase family. In terms of processing, acetylation of Lys-118, Lys-164 and Lys-290 is observed in liver mitochondria from fasted mice but not from fed mice. May be deacetylated by Sirt5; however it is unclear whether Sirt5 mediates deacetylation or desuccinylation of Uox; additional evidence is required to validate these results.

The protein resides in the peroxisome. Its subcellular location is the mitochondrion. The catalysed reaction is urate + O2 + H2O = 5-hydroxyisourate + H2O2. Its pathway is purine metabolism; urate degradation; (S)-allantoin from urate: step 1/3. Functionally, catalyzes the oxidation of uric acid to 5-hydroxyisourate, which is further processed to form (S)-allantoin. The polypeptide is Uricase (Uox) (Mus musculus (Mouse)).